A 100-amino-acid polypeptide reads, in one-letter code: Integration host factor subunit alpha (100 aa).

Positions 50–70 (GNFQLRDKPQRPGRNPKTGEE) are disordered.

The protein belongs to the bacterial histone-like protein family. In terms of assembly, heterodimer of an alpha and a beta chain.

Functionally, this protein is one of the two subunits of integration host factor, a specific DNA-binding protein that functions in genetic recombination as well as in transcriptional and translational control. The polypeptide is Integration host factor subunit alpha (Chromobacterium violaceum (strain ATCC 12472 / DSM 30191 / JCM 1249 / CCUG 213 / NBRC 12614 / NCIMB 9131 / NCTC 9757 / MK)).